Here is a 180-residue protein sequence, read N- to C-terminus: Adenine phosphoribosyltransferase (180 aa).

The residue at position 2 (alanine 2) is an N-acetylalanine. Serine 15 and serine 30 each carry phosphoserine. Position 60 is a phosphotyrosine (tyrosine 60). Position 66 is a phosphoserine (serine 66). Lysine 114 is subject to N6-acetyllysine. Threonine 135 carries the post-translational modification Phosphothreonine.

It belongs to the purine/pyrimidine phosphoribosyltransferase family. As to quaternary structure, homodimer.

The protein resides in the cytoplasm. The enzyme catalyses AMP + diphosphate = 5-phospho-alpha-D-ribose 1-diphosphate + adenine. Its pathway is purine metabolism; AMP biosynthesis via salvage pathway; AMP from adenine: step 1/1. Catalyzes a salvage reaction resulting in the formation of AMP, that is energically less costly than de novo synthesis. The sequence is that of Adenine phosphoribosyltransferase from Dipodillus campestris (North African gerbil).